A 615-amino-acid polypeptide reads, in one-letter code: 1-deoxy-D-xylulose-5-phosphate synthase (615 aa).

Residues His-77 and 118–120 (GHS) each bind thiamine diphosphate. Asp-149 contacts Mg(2+). Residues 150 to 151 (GA), Asn-178, Tyr-286, and Glu-367 contribute to the thiamine diphosphate site. Asn-178 provides a ligand contact to Mg(2+).

This sequence belongs to the transketolase family. DXPS subfamily. As to quaternary structure, homodimer. Mg(2+) serves as cofactor. Thiamine diphosphate is required as a cofactor.

The catalysed reaction is D-glyceraldehyde 3-phosphate + pyruvate + H(+) = 1-deoxy-D-xylulose 5-phosphate + CO2. It participates in metabolic intermediate biosynthesis; 1-deoxy-D-xylulose 5-phosphate biosynthesis; 1-deoxy-D-xylulose 5-phosphate from D-glyceraldehyde 3-phosphate and pyruvate: step 1/1. Catalyzes the acyloin condensation reaction between C atoms 2 and 3 of pyruvate and glyceraldehyde 3-phosphate to yield 1-deoxy-D-xylulose-5-phosphate (DXP). The chain is 1-deoxy-D-xylulose-5-phosphate synthase from Glaesserella parasuis serovar 5 (strain SH0165) (Haemophilus parasuis).